The sequence spans 325 residues: Homocysteine S-methyltransferase 2 (325 aa).

Residues 6-321 (LKQFLADNPK…KDIQEISAAV (316 aa)) enclose the Hcy-binding domain. At T138 the chain carries Phosphothreonine. Residues C239, C306, and C307 each coordinate Zn(2+).

Zn(2+) serves as cofactor.

The protein localises to the cytoplasm. It is found in the nucleus. It carries out the reaction S-methyl-L-methionine + L-homocysteine = 2 L-methionine + H(+). In terms of biological role, homocysteine S-methyltransferase involved in the conversion of S-adenosylmethionine (AdoMet) to methionine to control the methionine/AdoMet ratio. Also converts S-methylmethionine (SMM) to methionine. The polypeptide is Homocysteine S-methyltransferase 2 (SAM4) (Saccharomyces cerevisiae (strain ATCC 204508 / S288c) (Baker's yeast)).